A 203-amino-acid polypeptide reads, in one-letter code: MEFWGIEIKPGKPFKVIQKDGFMVHASQVTLGDVEKVKKDETFAVYVKIGDDENGFMIGNLSQKFPQFSIDLYLGHEFEISHNSTSSVYLIGYRTFDAFDELDEEIDSDSELDEYMEQQIAALPQNEINPEEDDESDSDEMGLDEDDDSSDEEDVEAEAPLKVAPPSKKMPNGAFEIAKGGKKNKSSGGKKRCPFPCGPSCKK.

Positions 2–5 (EFWG) are required to repress transcription. The segment at 121 to 203 (AALPQNEINP…PFPCGPSCKK (83 aa)) is disordered. The segment covering 129–157 (NPEEDDESDSDEMGLDEDDDSSDEEDVEA) has biased composition (acidic residues). A compositionally biased stretch (basic residues) spans 180-193 (GGKKNKSSGGKKRC).

This sequence belongs to the histone deacetylase HD2 family. Confined to stems and flowers with young siliques.

The protein resides in the nucleus. It is found in the nucleolus. Its function is as follows. Probably mediates the deacetylation of lysine residues lysine residues on the N-terminal part of the core histones (H2A, H2B, H3 and H4). Histone deacetylation gives a tag for epigenetic repression and plays an important role in transcriptional regulation, cell cycle progression and developmental events. The chain is Histone deacetylase HDT4 (HDT4) from Arabidopsis thaliana (Mouse-ear cress).